A 630-amino-acid polypeptide reads, in one-letter code: Transferrin-binding protein B (630 aa).

The N-terminal stretch at 1–17 (MKSVPLITGGLSFLLSA) is a signal peptide. A lipid anchor (N-palmitoyl cysteine) is attached at Cys-18. Cys-18 is lipidated: S-diacylglycerol cysteine. 3 disordered regions span residues 26 to 53 (DVDDVSNPSSSKPRYQDDTSSSRTKSNL), 280 to 301 (VTPTKSTSDEHPFTSEGTLEGG), and 591 to 613 (NNPTATNSESSSTVPSPPNSPNA). A compositionally biased stretch (polar residues) spans 32-50 (NPSSSKPRYQDDTSSSRTK).

This sequence belongs to the TbpB family.

It localises to the cell outer membrane. It is found in the cell surface. In terms of biological role, haemophilus acquires iron by extracting it from serum transferrin (TF) in its human host. Acts as a transferrin receptor and is required for transferrin utilization. The polypeptide is Transferrin-binding protein B (Haemophilus influenzae (strain 86-028NP)).